The chain runs to 284 residues: Nucleotide-binding protein VSAL_I0495 (284 aa).

Position 8–15 (8–15) interacts with ATP; that stretch reads GNSGAGKS. 56–59 contacts GTP; the sequence is DIRN.

Belongs to the RapZ-like family.

Its function is as follows. Displays ATPase and GTPase activities. The polypeptide is Nucleotide-binding protein VSAL_I0495 (Aliivibrio salmonicida (strain LFI1238) (Vibrio salmonicida (strain LFI1238))).